A 260-amino-acid chain; its full sequence is Tryptophan synthase alpha chain (260 aa).

Residues Glu-52 and Asp-63 each act as proton acceptor in the active site.

This sequence belongs to the TrpA family. In terms of assembly, tetramer of two alpha and two beta chains.

The catalysed reaction is (1S,2R)-1-C-(indol-3-yl)glycerol 3-phosphate + L-serine = D-glyceraldehyde 3-phosphate + L-tryptophan + H2O. It participates in amino-acid biosynthesis; L-tryptophan biosynthesis; L-tryptophan from chorismate: step 5/5. In terms of biological role, the alpha subunit is responsible for the aldol cleavage of indoleglycerol phosphate to indole and glyceraldehyde 3-phosphate. This Streptococcus mutans serotype c (strain ATCC 700610 / UA159) protein is Tryptophan synthase alpha chain.